A 118-amino-acid chain; its full sequence is Holo-[acyl-carrier-protein] synthase (118 aa).

Aspartate 5 and glutamate 50 together coordinate Mg(2+).

The protein belongs to the P-Pant transferase superfamily. AcpS family. It depends on Mg(2+) as a cofactor.

The protein localises to the cytoplasm. The catalysed reaction is apo-[ACP] + CoA = holo-[ACP] + adenosine 3',5'-bisphosphate + H(+). Functionally, transfers the 4'-phosphopantetheine moiety from coenzyme A to a Ser of acyl-carrier-protein. This chain is Holo-[acyl-carrier-protein] synthase, found in Aliarcobacter butzleri (strain RM4018) (Arcobacter butzleri).